The primary structure comprises 715 residues: Fatty acid oxidation complex subunit alpha (715 aa).

An enoyl-CoA hydratase region spans residues 1–190 (MTTTSAFMLN…KAGLVDDVVP (190 aa)). The tract at residues 306 to 714 (GPLNSVGILG…FWTNGETDQG (409 aa)) is 3-hydroxyacyl-CoA dehydrogenase.

In the N-terminal section; belongs to the enoyl-CoA hydratase/isomerase family. It in the central section; belongs to the 3-hydroxyacyl-CoA dehydrogenase family. In terms of assembly, heterotetramer of two alpha chains (FadJ) and two beta chains (FadI).

The protein localises to the cytoplasm. The catalysed reaction is a (3S)-3-hydroxyacyl-CoA = a (2E)-enoyl-CoA + H2O. It catalyses the reaction a 4-saturated-(3S)-3-hydroxyacyl-CoA = a (3E)-enoyl-CoA + H2O. It carries out the reaction a (3S)-3-hydroxyacyl-CoA + NAD(+) = a 3-oxoacyl-CoA + NADH + H(+). The enzyme catalyses (3S)-3-hydroxybutanoyl-CoA = (3R)-3-hydroxybutanoyl-CoA. It functions in the pathway lipid metabolism; fatty acid beta-oxidation. Its function is as follows. Catalyzes the formation of a hydroxyacyl-CoA by addition of water on enoyl-CoA. Also exhibits 3-hydroxyacyl-CoA epimerase and 3-hydroxyacyl-CoA dehydrogenase activities. The protein is Fatty acid oxidation complex subunit alpha of Salmonella choleraesuis (strain SC-B67).